The following is a 310-amino-acid chain: Glycine--tRNA ligase alpha subunit (310 aa).

It belongs to the class-II aminoacyl-tRNA synthetase family. In terms of assembly, tetramer of two alpha and two beta subunits.

The protein localises to the cytoplasm. It catalyses the reaction tRNA(Gly) + glycine + ATP = glycyl-tRNA(Gly) + AMP + diphosphate. The protein is Glycine--tRNA ligase alpha subunit of Agrobacterium fabrum (strain C58 / ATCC 33970) (Agrobacterium tumefaciens (strain C58)).